The following is a 220-amino-acid chain: Adenylate kinase (220 aa).

Gly-10–Thr-15 is an ATP binding site. The segment at Ala-30–Ile-59 is NMP. Residues Arg-36, Asp-57–Ile-59, Gly-83–Arg-86, and Gln-90 each bind AMP. The interval Gly-124–Asp-161 is LID. An ATP-binding site is contributed by Arg-125. Positions 128 and 131 each coordinate Zn(2+). Residue Val-134 to Tyr-135 participates in ATP binding. 2 residues coordinate Zn(2+): Cys-148 and Cys-151. Residues Arg-158 and Arg-169 each coordinate AMP. Gly-197 is a binding site for ATP.

Belongs to the adenylate kinase family. Monomer.

Its subcellular location is the cytoplasm. The catalysed reaction is AMP + ATP = 2 ADP. It functions in the pathway purine metabolism; AMP biosynthesis via salvage pathway; AMP from ADP: step 1/1. Catalyzes the reversible transfer of the terminal phosphate group between ATP and AMP. Plays an important role in cellular energy homeostasis and in adenine nucleotide metabolism. The chain is Adenylate kinase from Pyrococcus abyssi (strain GE5 / Orsay).